A 429-amino-acid chain; its full sequence is Glutamate-1-semialdehyde 2,1-aminomutase 2 (429 aa).

An N6-(pyridoxal phosphate)lysine modification is found at lysine 268.

It belongs to the class-III pyridoxal-phosphate-dependent aminotransferase family. HemL subfamily. Homodimer. Pyridoxal 5'-phosphate serves as cofactor.

The protein localises to the cytoplasm. It carries out the reaction (S)-4-amino-5-oxopentanoate = 5-aminolevulinate. Its pathway is porphyrin-containing compound metabolism; protoporphyrin-IX biosynthesis; 5-aminolevulinate from L-glutamyl-tRNA(Glu): step 2/2. This is Glutamate-1-semialdehyde 2,1-aminomutase 2 from Staphylococcus aureus (strain MSSA476).